The following is a 347-amino-acid chain: Transcription factor JunB (347 aa).

Residues Lys-4, Lys-33, and Lys-36 each participate in a glycyl lysine isopeptide (Lys-Gly) (interchain with G-Cter in SUMO2) cross-link. A disordered region spans residues 50-77 (LKAPGARGPGPEGNGGGSYFSSQGSDTG). The span at 56–67 (RGPGPEGNGGGS) shows a compositional bias: gly residues. Residues 68-77 (YFSSQGSDTG) are compositionally biased toward polar residues. Lys-81 participates in a covalent cross-link: Glycyl lysine isopeptide (Lys-Gly) (interchain with G-Cter in SUMO2). Residues Thr-102 and Thr-104 each carry the phosphothreonine modification. A Phosphoserine modification is found at Ser-117. Lys-141 participates in a covalent cross-link: Glycyl lysine isopeptide (Lys-Gly) (interchain with G-Cter in SUMO2). At Lys-240 the chain carries N6-acetyllysine; alternate. Residue Lys-240 forms a Glycyl lysine isopeptide (Lys-Gly) (interchain with G-Cter in SUMO1); alternate linkage. Lys-240 is covalently cross-linked (Glycyl lysine isopeptide (Lys-Gly) (interchain with G-Cter in SUMO2); alternate). Over residues 241–253 (EEPQTVPEARSRD) the composition is skewed to basic and acidic residues. The interval 241 to 260 (EEPQTVPEARSRDATPPVSP) is disordered. A Phosphoserine modification is found at Ser-251. Position 255 is a phosphothreonine (Thr-255). At Ser-259 the chain carries Phosphoserine. The interval 268–295 (RIKVERKRLRNRLAATKCRKRKLERIAR) is basic motif. The 64-residue stretch at 268–331 (RIKVERKRLR…AQLKQKVMTH (64 aa)) folds into the bZIP domain. Residues 296–324 (LEDKVKTLKAENAGLSSTAGLLREQVAQL) form a leucine-zipper region. Residue Lys-343 forms a Glycyl lysine isopeptide (Lys-Gly) (interchain with G-Cter in SUMO2) linkage.

It belongs to the bZIP family. Jun subfamily. As to quaternary structure, binds DNA as a homodimer or as a heterodimer with another member of the Jun/Fos family. Component of an AP-1 transcription factor complex composed of JUN-FOS heterodimers. As part of the AP-1 transcription factor complex, forms heterodimers with FOSB, thereby binding to the AP-1 consensus sequence and stimulating transcription. Interacts with ITCH (via its WW domains). Ubiquitinated by ITCH, leading to its degradation.

Its subcellular location is the nucleus. Transcription factor involved in regulating gene activity following the primary growth factor response. Binds to the DNA sequence 5'-TGA[GC]TCA-3'. Heterodimerizes with proteins of the FOS family to form an AP-1 transcription complex, thereby enhancing its DNA binding activity to an AP-1 consensus sequence and its transcriptional activity. The chain is Transcription factor JunB (JUNB) from Bos taurus (Bovine).